We begin with the raw amino-acid sequence, 1171 residues long: ATP-dependent helicase/deoxyribonuclease subunit B (1171 aa).

The UvrD-like helicase ATP-binding domain maps to 1–343 (MSLRFVIGRA…LVAEENYRYR (343 aa)). 8 to 15 (GRAGSGKS) provides a ligand contact to ATP. Positions 281-587 (MEQPRFHSPA…QFANIPPSLD (307 aa)) constitute a UvrD-like helicase C-terminal domain. The [4Fe-4S] cluster site is built by Cys805, Cys1129, Cys1132, and Cys1138.

This sequence belongs to the helicase family. AddB/RexB type 1 subfamily. In terms of assembly, heterodimer of AddA and AddB. Mg(2+) serves as cofactor. The cofactor is [4Fe-4S] cluster.

Functionally, the heterodimer acts as both an ATP-dependent DNA helicase and an ATP-dependent, dual-direction single-stranded exonuclease. Recognizes the chi site generating a DNA molecule suitable for the initiation of homologous recombination. The AddB subunit has 5' -&gt; 3' nuclease activity but not helicase activity. The chain is ATP-dependent helicase/deoxyribonuclease subunit B from Bacillus thuringiensis subsp. konkukian (strain 97-27).